Consider the following 310-residue polypeptide: Acetyl-coenzyme A carboxylase carboxyl transferase subunit alpha (310 aa).

Positions 31–285 (SFERELRIIN…KQKILRRLKQ (255 aa)) constitute a CoA carboxyltransferase C-terminal domain.

This sequence belongs to the AccA family. As to quaternary structure, acetyl-CoA carboxylase is a heterohexamer composed of biotin carboxyl carrier protein (accB), biotin carboxylase (accC) and two subunits each of ACCase subunit alpha (accA) and ACCase subunit beta (accD).

The protein resides in the plastid. It localises to the chloroplast. The catalysed reaction is N(6)-carboxybiotinyl-L-lysyl-[protein] + acetyl-CoA = N(6)-biotinyl-L-lysyl-[protein] + malonyl-CoA. The protein operates within lipid metabolism; malonyl-CoA biosynthesis; malonyl-CoA from acetyl-CoA: step 1/1. Component of the acetyl coenzyme A carboxylase (ACC) complex. First, biotin carboxylase catalyzes the carboxylation of biotin on its carrier protein (BCCP) and then the CO(2) group is transferred by the carboxyltransferase to acetyl-CoA to form malonyl-CoA. The protein is Acetyl-coenzyme A carboxylase carboxyl transferase subunit alpha of Cyanidioschyzon merolae (strain NIES-3377 / 10D) (Unicellular red alga).